The following is a 160-amino-acid chain: Ribosome maturation factor RimP (160 aa).

It belongs to the RimP family.

It is found in the cytoplasm. Its function is as follows. Required for maturation of 30S ribosomal subunits. The protein is Ribosome maturation factor RimP of Syntrophus aciditrophicus (strain SB).